Consider the following 240-residue polypeptide: Transmembrane protein 65 (240 aa).

The N-terminal 61 residues, 1-61 (MSRLLPLLRS…RRLGTHPKKE (61 aa)), are a transit peptide targeting the mitochondrion. Residues 62 to 110 (PMEALNTAQGARDFIYSLHSTERSCLLKELHRFESIAIAQEKLEAPPPT) are Cytoplasmic-facing. Residues 111 to 131 (PGQLRYVFIHNAIPFIGFGFL) traverse the membrane as a helical segment. Topologically, residues 132–142 (DNAIMIVAGTH) are extracellular. Residues 143 to 165 (IEMSIGIILGISTMAAAALGNLV) traverse the membrane as a helical segment. At 166–209 (SDLAGLGLAGYVEALASRLGLSIPDLTPKQVDMWQTRLSTHLGK) the chain is on the cytoplasmic side. A helical transmembrane segment spans residues 210–230 (AVGVTIGCILGMFPLIFFGGG). Topologically, residues 231 to 240 (EEDEKLETKS) are extracellular.

Monomer. Homodimer. Interacts with GJA1. Interacts weakly with DSP. Interacts with SCN1B. In terms of tissue distribution, predominantly expressed the ventricular tissue (at protein level).

It localises to the cell membrane. Its subcellular location is the mitochondrion inner membrane. Its function is as follows. Essential for maintaining proper cardiac intercalated disk (ICD) structure and function as well as cardiac conduction velocity in the heart. Its association with SCN1B is required for stabilizing the perinexus in the ICD and for localization of GJA1 and SCN5A to the ICD. May regulate the function of the gap junction protein GJA1 and may contribute to the stability and proper localization of GJA1 to cardiac intercalated disk thereby regulating gap junction communication. May also play a role in the regulation of mitochondrial respiration and mitochondrial DNA copy number maintenance. The polypeptide is Transmembrane protein 65 (TMEM65) (Homo sapiens (Human)).